We begin with the raw amino-acid sequence, 212 residues long: Adenylate kinase (212 aa).

10–15 (GAGKGT) serves as a coordination point for ATP. The tract at residues 30-59 (STGDMFRAAMANQTEMGRLAKSYIDKGELV) is NMP. AMP is bound by residues T31, R36, 57–59 (ELV), 86–89 (GYPR), and Q93. Residues 127 to 159 (GRIINRKTGETFHKVFNPPVDYKEEDYYQREDD) form an LID region. Residues R128 and 137–138 (TF) contribute to the ATP site. AMP is bound by residues R156 and R167. Position 195 (Q195) interacts with ATP.

It belongs to the adenylate kinase family. As to quaternary structure, monomer.

It is found in the cytoplasm. It carries out the reaction AMP + ATP = 2 ADP. It functions in the pathway purine metabolism; AMP biosynthesis via salvage pathway; AMP from ADP: step 1/1. Its function is as follows. Catalyzes the reversible transfer of the terminal phosphate group between ATP and AMP. Plays an important role in cellular energy homeostasis and in adenine nucleotide metabolism. This is Adenylate kinase from Streptococcus pyogenes serotype M3 (strain ATCC BAA-595 / MGAS315).